A 480-amino-acid polypeptide reads, in one-letter code: Ribulose bisphosphate carboxylase large chain (480 aa).

The propeptide occupies 1 to 2; sequence MS. Proline 3 carries the N-acetylproline modification. Lysine 14 is subject to N6,N6,N6-trimethyllysine. Residues asparagine 123 and threonine 173 each coordinate substrate. The active-site Proton acceptor is lysine 175. Lysine 177 serves as a coordination point for substrate. Positions 201, 203, and 204 each coordinate Mg(2+). The residue at position 201 (lysine 201) is an N6-carboxylysine. Residue histidine 294 is the Proton acceptor of the active site. Substrate is bound by residues arginine 295, histidine 327, and serine 379.

Belongs to the RuBisCO large chain family. Type I subfamily. In terms of assembly, heterohexadecamer of 8 large chains and 8 small chains; disulfide-linked. The disulfide link is formed within the large subunit homodimers. Requires Mg(2+) as cofactor. In terms of processing, the disulfide bond which can form in the large chain dimeric partners within the hexadecamer appears to be associated with oxidative stress and protein turnover.

It is found in the plastid. Its subcellular location is the chloroplast. The catalysed reaction is 2 (2R)-3-phosphoglycerate + 2 H(+) = D-ribulose 1,5-bisphosphate + CO2 + H2O. It catalyses the reaction D-ribulose 1,5-bisphosphate + O2 = 2-phosphoglycolate + (2R)-3-phosphoglycerate + 2 H(+). In terms of biological role, ruBisCO catalyzes two reactions: the carboxylation of D-ribulose 1,5-bisphosphate, the primary event in carbon dioxide fixation, as well as the oxidative fragmentation of the pentose substrate in the photorespiration process. Both reactions occur simultaneously and in competition at the same active site. The protein is Ribulose bisphosphate carboxylase large chain of Gossypium barbadense (Sea Island cotton).